A 20-amino-acid chain; its full sequence is Agglutinin beta-2 chain isoform 1 (20 aa).

The span at 1 to 10 (TQSTGTSQTI) shows a compositional bias: polar residues. Positions 1–20 (TQSTGTSQTIAVGLWGGPDN) are disordered.

This sequence belongs to the jacalin lectin family. As to quaternary structure, tetramer of four alpha chains associated with two or four beta chains.

Alpha-methyl-D-mannoside and D-mannose specific lectin. Binds IgA. This Morus nigra (Black mulberry) protein is Agglutinin beta-2 chain isoform 1.